Reading from the N-terminus, the 205-residue chain is MLQQDSNDDTEDVSLFDAEEETTNRPRKAKIRHPVASFFHLFFRVSAIIVYLLCGLLSSSFITCMVTIILLLSCDFWAVKNVTGRLMVGLRWWNHIDEDGKSHWVFESRKESSQENKTVSEAESRIFWLGLIACPVLWVIFAFSALFSFRVKWLAVVIMGVVLQGANLYGYIRCKVRSRKHLTSMATSYFGKQFLRQNTGDDQTS.

Methionine 1 is modified (N-acetylmethionine). Residues 1–21 form a disordered region; the sequence is MLQQDSNDDTEDVSLFDAEEE. 4 helical membrane passes run 34–53, 54–72, 126–146, and 152–172; these read PVASFFHLFFRVSAIIVYLL, CGLLSSSFITCMVTIILLL, IFWLGLIACPVLWVIFAFSAL, and KWLAVVIMGVVLQGANLYGYI.

The protein belongs to the TVP23 family.

The protein resides in the membrane. This Homo sapiens (Human) protein is Golgi apparatus membrane protein TVP23 homolog B (TVP23B).